The sequence spans 374 residues: Eukaryotic translation initiation factor 3 subunit M (374 aa).

Residues 180 to 339 (EAAKVMVELL…KKVVVSHSTH (160 aa)) form the PCI domain.

Belongs to the eIF-3 subunit M family. As to quaternary structure, component of the eukaryotic translation initiation factor 3 (eIF-3) complex, which is composed of 13 subunits: eif3a, eif3b, eif3c, eif3d, eif3e, eif3f, eif3g, eif3h, eif3i, eif3j, eif3k, eif3l and eif3m.

The protein localises to the cytoplasm. Component of the eukaryotic translation initiation factor 3 (eIF-3) complex, which is involved in protein synthesis of a specialized repertoire of mRNAs and, together with other initiation factors, stimulates binding of mRNA and methionyl-tRNAi to the 40S ribosome. The eIF-3 complex specifically targets and initiates translation of a subset of mRNAs involved in cell proliferation. This chain is Eukaryotic translation initiation factor 3 subunit M (eif3m), found in Xenopus laevis (African clawed frog).